Reading from the N-terminus, the 1123-residue chain is Ubiquitin carboxyl-terminal hydrolase 43 (1123 aa).

Positions 1–102 are disordered; that stretch reads MDLGPGDAAG…DGARPPGAQG (102 aa). The span at 17-28 shows a compositional bias: basic residues; sequence RPRRRRSLRRLF. Residues 29–39 show a composition bias toward low complexity; it reads SRFLLALGSRS. Residues 101-710 form the USP domain; sequence QGLKNHGNTC…GAYILFYQKR (610 aa). Catalysis depends on C110, which acts as the Nucleophile. The disordered stretch occupies residues 202–221; sequence EGSSRGPVSEKLPPEATKTS. H668 functions as the Proton acceptor in the catalytic mechanism. R746 bears the Asymmetric dimethylarginine mark. Disordered regions lie at residues 795–826, 854–886, 959–1049, and 1068–1099; these read ISMK…EKPP, TGTA…IERG, FQMG…RIPE, and SSLR…QASY. A Phosphoserine modification is found at S969. Positions 979-990 are enriched in basic and acidic residues; it reads KDSRRGTSELDR. Over residues 1016 to 1027 the composition is skewed to low complexity; sequence VSPQVPPVSLVS. S1041 bears the Phosphoserine mark.

This sequence belongs to the peptidase C19 family. As to expression, expressed in brain, aorta and lung at low levels.

The catalysed reaction is Thiol-dependent hydrolysis of ester, thioester, amide, peptide and isopeptide bonds formed by the C-terminal Gly of ubiquitin (a 76-residue protein attached to proteins as an intracellular targeting signal).. May recognize and hydrolyze the peptide bond at the C-terminal Gly of ubiquitin. Involved in the processing of poly-ubiquitin precursors as well as that of ubiquitinated proteins. This Homo sapiens (Human) protein is Ubiquitin carboxyl-terminal hydrolase 43 (USP43).